Reading from the N-terminus, the 24-residue chain is Neurotoxin-2 (24 aa).

An LCN-type CS-alpha/beta domain is found at 1 to 24 (EDGYLLNRDTGCKVSCGTCRYCND).

It belongs to the long (4 C-C) scorpion toxin superfamily. Sodium channel inhibitor family. Alpha subfamily. As to expression, expressed by the venom gland.

It is found in the secreted. Functionally, binds to sodium channels (Nav) and inhibits the inactivation of the activated channels, thereby blocking neuronal transmission. This toxin is active against mammals. The sequence is that of Neurotoxin-2 from Hottentotta tamulus (Eastern Indian scorpion).